Consider the following 351-residue polypeptide: Anthranilate phosphoribosyltransferase (351 aa).

5-phospho-alpha-D-ribose 1-diphosphate is bound by residues Gly80, 83–84, Thr88, 90–93, 108–116, and Ser120; these read GD, NIST, and KHGNRSITS. Gly80 is a binding site for anthranilate. Residue Ser92 coordinates Mg(2+). Asn111 contacts anthranilate. Anthranilate is bound at residue Arg166. Residues Asp229 and Glu230 each coordinate Mg(2+).

Belongs to the anthranilate phosphoribosyltransferase family. Homodimer. It depends on Mg(2+) as a cofactor.

The enzyme catalyses N-(5-phospho-beta-D-ribosyl)anthranilate + diphosphate = 5-phospho-alpha-D-ribose 1-diphosphate + anthranilate. The protein operates within amino-acid biosynthesis; L-tryptophan biosynthesis; L-tryptophan from chorismate: step 2/5. Functionally, catalyzes the transfer of the phosphoribosyl group of 5-phosphorylribose-1-pyrophosphate (PRPP) to anthranilate to yield N-(5'-phosphoribosyl)-anthranilate (PRA). This Chlorobaculum parvum (strain DSM 263 / NCIMB 8327) (Chlorobium vibrioforme subsp. thiosulfatophilum) protein is Anthranilate phosphoribosyltransferase.